A 195-amino-acid polypeptide reads, in one-letter code: Ribonuclease HII (195 aa).

In terms of domain architecture, RNase H type-2 spans 8–195 (WGVVGVDEAG…FAPVRRLLGG (188 aa)). A divalent metal cation-binding residues include Asp14, Glu15, and Asp106.

Belongs to the RNase HII family. Mn(2+) serves as cofactor. Mg(2+) is required as a cofactor.

It is found in the cytoplasm. The catalysed reaction is Endonucleolytic cleavage to 5'-phosphomonoester.. Functionally, endonuclease that specifically degrades the RNA of RNA-DNA hybrids. This is Ribonuclease HII from Halorhodospira halophila (strain DSM 244 / SL1) (Ectothiorhodospira halophila (strain DSM 244 / SL1)).